The sequence spans 158 residues: Large ribosomal subunit protein uL16 (158 aa).

It belongs to the universal ribosomal protein uL16 family. As to quaternary structure, part of the 50S ribosomal subunit.

In terms of biological role, binds 23S rRNA and is also seen to make contacts with the A and possibly P site tRNAs. The chain is Large ribosomal subunit protein uL16 from Prochlorococcus marinus (strain MIT 9313).